We begin with the raw amino-acid sequence, 465 residues long: Botryococcus squalene synthase (465 aa).

NADP(+) is bound by residues R48 and R73. Residues D76, E79, and D80 each coordinate Mg(2+). NADP(+) contacts are provided by R215, K315, and R317. 2 helical membrane-spanning segments follow: residues 395 to 415 and 429 to 449; these read AIRLLLLVGVVAYFAYAFNLG and ILDLSQKGLAVASVALLLLVL.

Belongs to the phytoene/squalene synthase family.

Its subcellular location is the membrane. The enzyme catalyses presqualene diphosphate + NADPH + H(+) = squalene + diphosphate + NADP(+). In terms of biological role, produces squalene when coexpressed with SSL-1 and bisfarnesyl ether and a very small amount of squalene when incubated alone in the presence of NADPH. This is Botryococcus squalene synthase (SSL-2) from Botryococcus braunii (Green alga).